Reading from the N-terminus, the 285-residue chain is Putative alkaline ceramidase dcd3B (285 aa).

Transmembrane regions (helical) follow at residues 34-54, 77-97, and 104-124; these read TFSS…MMSA, VLFS…YHAT, and LFDE…ILTI. A glycan (N-linked (GlcNAc...) asparagine) is linked at N131. Transmembrane regions (helical) follow at residues 141 to 161, 166 to 186, 200 to 220, and 236 to 256; these read RFLP…ITII, IILQ…SYMY, PKKF…SWLT, and LHAV…QFFI.

This sequence belongs to the alkaline ceramidase family.

It is found in the membrane. The sequence is that of Putative alkaline ceramidase dcd3B (dcd3B) from Dictyostelium discoideum (Social amoeba).